Consider the following 540-residue polypeptide: MLO protein homolog 1 (540 aa).

Over M1–T16 the chain is Extracellular. The helical transmembrane segment at W17–L37 threads the bilayer. The Cytoplasmic segment spans residues H38–K60. Residues A61–S81 traverse the membrane as a helical segment. The Extracellular portion of the chain corresponds to K82–H142. A helical membrane pass occupies residues I143–G163. Residues R164–K265 lie on the Cytoplasmic side of the membrane. A helical transmembrane segment spans residues V266–I286. A topological domain (extracellular) is located at residue H287. The chain crosses the membrane as a helical span at residues G288–T308. Residues K309 to D347 are Cytoplasmic-facing. A helical membrane pass occupies residues W348–V368. Residues W369–N383 lie on the Extracellular side of the membrane. The helical transmembrane segment at I384–I404 threads the bilayer. The Cytoplasmic portion of the chain corresponds to T405–R540. Positions E426–D447 are calmodulin-binding. The segment at A468 to S526 is disordered. Basic and acidic residues-rich tracts occupy residues L474 to D483 and L512 to W521.

Belongs to the MLO family.

Its subcellular location is the membrane. In terms of biological role, may be involved in modulation of pathogen defense and leaf cell death. Activity seems to be regulated by Ca(2+)-dependent calmodulin binding and seems not to require heterotrimeric G proteins. The protein is MLO protein homolog 1 (MLO1) of Oryza sativa subsp. indica (Rice).